The sequence spans 132 residues: Rubredoxin-1 (132 aa).

One can recognise a Rubredoxin-like domain in the interval 1–53 (MSRYQCPDCQYIYDENKGEPHEGFHPNTSWNDIPKDWACPDCAVRDKVDFIFL). Fe cation-binding residues include C6, C9, C39, and C42. Residues 108 to 132 (TEVLDQASTPQVVRKSSTRKKMRNK) are disordered. The span at 113 to 122 (QASTPQVVRK) shows a compositional bias: polar residues. Residues 123–132 (SSTRKKMRNK) show a composition bias toward basic residues.

Belongs to the rubredoxin family. Fe(3+) serves as cofactor.

It localises to the cytoplasm. The protein operates within hydrocarbon metabolism; alkane degradation. In terms of biological role, not known. Probably involved in an electron transport pathway, but not required for the hydrocarbon hydroxylating system. Seems to be non-functional. The sequence is that of Rubredoxin-1 (alkF) from Ectopseudomonas oleovorans (Pseudomonas oleovorans).